The sequence spans 311 residues: Biotin synthase (311 aa).

Residues 32 to 258 (NGVQFCQLLN…LFPLSRIRLA (227 aa)) form the Radical SAM core domain. [4Fe-4S] cluster is bound by residues cysteine 47, cysteine 51, and cysteine 54. Cysteine 91, cysteine 124, cysteine 184, and arginine 256 together coordinate [2Fe-2S] cluster.

It belongs to the radical SAM superfamily. Biotin synthase family. As to quaternary structure, homodimer. [4Fe-4S] cluster is required as a cofactor. [2Fe-2S] cluster serves as cofactor.

It catalyses the reaction (4R,5S)-dethiobiotin + (sulfur carrier)-SH + 2 reduced [2Fe-2S]-[ferredoxin] + 2 S-adenosyl-L-methionine = (sulfur carrier)-H + biotin + 2 5'-deoxyadenosine + 2 L-methionine + 2 oxidized [2Fe-2S]-[ferredoxin]. It functions in the pathway cofactor biosynthesis; biotin biosynthesis; biotin from 7,8-diaminononanoate: step 2/2. Functionally, catalyzes the conversion of dethiobiotin (DTB) to biotin by the insertion of a sulfur atom into dethiobiotin via a radical-based mechanism. The chain is Biotin synthase from Methylacidiphilum infernorum (isolate V4) (Methylokorus infernorum (strain V4)).